Consider the following 98-residue polypeptide: NADH-ubiquinone oxidoreductase chain 4L (98 aa).

The next 3 helical transmembrane spans lie at 1 to 21 (MSLVYMNIMIAFLTSLLGLLM), 29 to 49 (SLLCLEGMMLSLFILSTIMIL), and 61 to 81 (IILLVFAACEAAIGLSLLVMV).

This sequence belongs to the complex I subunit 4L family. As to quaternary structure, core subunit of respiratory chain NADH dehydrogenase (Complex I) which is composed of 45 different subunits.

It localises to the mitochondrion inner membrane. The enzyme catalyses a ubiquinone + NADH + 5 H(+)(in) = a ubiquinol + NAD(+) + 4 H(+)(out). Functionally, core subunit of the mitochondrial membrane respiratory chain NADH dehydrogenase (Complex I) which catalyzes electron transfer from NADH through the respiratory chain, using ubiquinone as an electron acceptor. Part of the enzyme membrane arm which is embedded in the lipid bilayer and involved in proton translocation. This chain is NADH-ubiquinone oxidoreductase chain 4L (MT-ND4L), found in Mogera wogura (Japanese mole).